Reading from the N-terminus, the 809-residue chain is Leucine--tRNA ligase (809 aa).

Positions 40–50 (PYPSGRIHMGH) match the 'HIGH' region motif. A 'KMSKS' region motif is present at residues 579-583 (KMSKS). Residue lysine 582 participates in ATP binding.

It belongs to the class-I aminoacyl-tRNA synthetase family.

It is found in the cytoplasm. It catalyses the reaction tRNA(Leu) + L-leucine + ATP = L-leucyl-tRNA(Leu) + AMP + diphosphate. In Campylobacter lari (strain RM2100 / D67 / ATCC BAA-1060), this protein is Leucine--tRNA ligase.